A 950-amino-acid polypeptide reads, in one-letter code: Glycine dehydrogenase (decarboxylating) (950 aa).

Lysine 698 carries the post-translational modification N6-(pyridoxal phosphate)lysine.

This sequence belongs to the GcvP family. In terms of assembly, the glycine cleavage system is composed of four proteins: P, T, L and H. It depends on pyridoxal 5'-phosphate as a cofactor.

The catalysed reaction is N(6)-[(R)-lipoyl]-L-lysyl-[glycine-cleavage complex H protein] + glycine + H(+) = N(6)-[(R)-S(8)-aminomethyldihydrolipoyl]-L-lysyl-[glycine-cleavage complex H protein] + CO2. In terms of biological role, the glycine cleavage system catalyzes the degradation of glycine. The P protein binds the alpha-amino group of glycine through its pyridoxal phosphate cofactor; CO(2) is released and the remaining methylamine moiety is then transferred to the lipoamide cofactor of the H protein. The polypeptide is Glycine dehydrogenase (decarboxylating) (Neisseria meningitidis serogroup C / serotype 2a (strain ATCC 700532 / DSM 15464 / FAM18)).